The chain runs to 188 residues: Elongation factor P (188 aa).

Lys34 carries the N6-(3,6-diaminohexanoyl)-5-hydroxylysine modification.

It belongs to the elongation factor P family. Post-translationally, may be beta-lysylated on the epsilon-amino group of Lys-34 by the combined action of EpmA and EpmB, and then hydroxylated on the C5 position of the same residue by EpmC (if this protein is present). Lysylation is critical for the stimulatory effect of EF-P on peptide-bond formation. The lysylation moiety may extend toward the peptidyltransferase center and stabilize the terminal 3-CCA end of the tRNA. Hydroxylation of the C5 position on Lys-34 may allow additional potential stabilizing hydrogen-bond interactions with the P-tRNA.

It is found in the cytoplasm. It participates in protein biosynthesis; polypeptide chain elongation. Functionally, involved in peptide bond synthesis. Alleviates ribosome stalling that occurs when 3 or more consecutive Pro residues or the sequence PPG is present in a protein, possibly by augmenting the peptidyl transferase activity of the ribosome. Modification of Lys-34 is required for alleviation. The protein is Elongation factor P of Xanthomonas axonopodis pv. citri (strain 306).